We begin with the raw amino-acid sequence, 737 residues long: Zinc finger protein 585A (737 aa).

One can recognise a KRAB domain in the interval 1 to 65; sequence MAAPTREEWR…QGERPRQSCP (65 aa). 6 C2H2-type zinc fingers span residues 126–148, 154–176, 182–204, 210–232, 238–260, and 266–288; these read YVCI…QKTH, FKCN…QRIH, YECS…EKIH, HECT…QKIH, YICI…RRIH, and YECS…QRVH. A C2H2-type 7; degenerate zinc finger spans residues 294–316; it reads YICTEYGKVFSNNSNLITHKKVQ. 15 consecutive C2H2-type zinc fingers follow at residues 322–344, 350–372, 378–400, 406–428, 434–456, 462–484, 490–512, 518–540, 546–568, 574–596, 602–624, 630–652, 658–680, 686–708, and 714–736; these read SICT…QRIH, YACS…QRIH, YICM…QIIH, YKCG…KRIH, YMCN…QKTH, YICS…QRIH, YECS…QKIH, YECH…QKIH, YVCT…QRIH, YECS…QPLH, YVCA…QKTH, YICS…HRIH, YECS…QRIH, YVCA…QTTH, and YKCG…QSNH.

This sequence belongs to the krueppel C2H2-type zinc-finger protein family.

The protein resides in the nucleus. Its function is as follows. May be involved in transcriptional regulation. This Pongo abelii (Sumatran orangutan) protein is Zinc finger protein 585A (ZNF585A).